Consider the following 48-residue polypeptide: Delta-stichotoxin-Hmg4b (48 aa).

Disulfide bonds link Cys3–Cys43, Cys5–Cys33, and Cys26–Cys44.

The protein belongs to the sea anemone sodium channel inhibitory toxin family. Type II subfamily.

It localises to the secreted. Its subcellular location is the nematocyst. In terms of biological role, binds specifically to voltage-gated sodium channels (Nav), thereby delaying their inactivation during signal transduction. Its toxicity is greater than that of RpII (AC P01534). The sequence is that of Delta-stichotoxin-Hmg4b from Heteractis magnifica (Magnificent sea anemone).